The sequence spans 320 residues: Mitochondrial ribosome-associated GTPase 1 (320 aa).

A CP-type G domain is found at 37–209 (LKQMRASPRK…LLDTPGVLPP (173 aa)). GTP contacts are provided by residues 81 to 84 (NKMD), 153 to 158 (NVGKSS), and glycine 205.

Belongs to the TRAFAC class YlqF/YawG GTPase family. MTG1 subfamily.

Its subcellular location is the mitochondrion inner membrane. Its function is as follows. Plays a role in the regulation of the mitochondrial ribosome assembly and of translational activity. Displays mitochondrial GTPase activity. The protein is Mitochondrial ribosome-associated GTPase 1 of Ictalurus punctatus (Channel catfish).